Consider the following 67-residue polypeptide: Cysteine-rich venom protein bucarin (67 aa).

Residues 13-58 form the SCP domain; the sequence is VDKHNALRRSVRPTARNMLQMEWNSNAAQNAKRFADRCTFAHSPPH.

The protein belongs to the CRISP family. Post-translationally, contains 8 disulfide bonds. Expressed by the venom gland.

The protein resides in the secreted. In terms of biological role, blocks contraction of smooth muscle elicited by high potassium-induced depolarization, but does not block caffeine-stimulated contraction. May target voltage-gated calcium channels on smooth muscle. The chain is Cysteine-rich venom protein bucarin from Bungarus candidus (Malayan krait).